The primary structure comprises 328 residues: dITP/XTP pyrophosphatase (328 aa).

The interval 1–129 (MSEKIYEYKD…ATSEQGFGDT (129 aa)) is unknown. Residues 130–324 (ILIATRNEGK…KLMEVFPAWQ (195 aa)) are NTP pyrophosphatase. Substrate is bound at residue 134-139 (TRNEGK). The active-site Proton acceptor is aspartate 196. Residue aspartate 196 coordinates Mg(2+). Residues serine 197, 280–283 (FGYD), lysine 303, and 308–309 (HR) each bind substrate.

Belongs to the HAM1 NTPase family. In terms of assembly, homodimer. Requires Mg(2+) as cofactor.

It carries out the reaction XTP + H2O = XMP + diphosphate + H(+). It catalyses the reaction dITP + H2O = dIMP + diphosphate + H(+). The enzyme catalyses ITP + H2O = IMP + diphosphate + H(+). Functionally, pyrophosphatase that catalyzes the hydrolysis of nucleoside triphosphates to their monophosphate derivatives, with a high preference for the non-canonical purine nucleotides XTP (xanthosine triphosphate), dITP (deoxyinosine triphosphate) and ITP. Seems to function as a house-cleaning enzyme that removes non-canonical purine nucleotides from the nucleotide pool, thus preventing their incorporation into DNA/RNA and avoiding chromosomal lesions. The chain is dITP/XTP pyrophosphatase from Streptococcus pyogenes serotype M18 (strain MGAS8232).